A 260-amino-acid polypeptide reads, in one-letter code: CD27 antigen (260 aa).

The signal sequence occupies residues methionine 1–serine 19. The Extracellular segment spans residues alanine 20 to arginine 191. 3 TNFR-Cys repeats span residues serine 26–aspartate 63, proline 64–cysteine 104, and alanine 105–glutamine 141. 8 cysteine pairs are disulfide-bonded: cysteine 27/cysteine 39, cysteine 40/cysteine 53, cysteine 43/cysteine 62, cysteine 65/cysteine 81, cysteine 84/cysteine 96, cysteine 87/cysteine 104, cysteine 106/cysteine 120, and cysteine 112/cysteine 117. N-linked (GlcNAc...) asparagine glycosylation occurs at asparagine 95. O-linked (GalNAc...) serine glycosylation is present at serine 127. Residues isoleucine 192–histidine 212 form a helical membrane-spanning segment. Residues glutamine 213–proline 260 are Cytoplasmic-facing. Serine 219 bears the Phosphoserine mark. Residues serine 219–proline 260 form a disordered region. Positions glutamate 249 to proline 260 are enriched in basic and acidic residues.

As to quaternary structure, homodimer. Interacts with SIVA1; may play a role in apoptosis through association with SIVA1. Interacts with TRAF2. Interacts ith PTPN6. Post-translationally, phosphorylated. N-glycosylated. In terms of processing, O-glycosylated with core 1 or possibly core 8 glycans. Found in most T-lymphocytes.

It localises to the cell membrane. Functionally, costimulatory immune-checkpoint receptor expressed at the surface of T-cells, NK-cells and B-cells which binds to and is activated by its ligand CD70/CD27L expressed by B-cells. The CD70-CD27 signaling pathway mediates antigen-specific T-cell activation and expansion which in turn provides immune surveillance of B-cells. Mechanistically, CD70 ligation activates the TRAF2-PTPN6 axis that subsequently inhibits LCK phosphorylation to promote phenotypic and transcriptional adaptations of T-cell memory. In addition, activation by CD70 on early progenitor cells provides a negative feedback signal to leukocyte differentiation during immune activation and thus modulates hematopoiesis. Negatively regulates the function of Th2 lymphocytes in the adipose tissue. The polypeptide is CD27 antigen (Homo sapiens (Human)).